A 397-amino-acid polypeptide reads, in one-letter code: uncharacterized protein (397 aa).

9 helical membrane-spanning segments follow: residues 1 to 21, 39 to 59, 76 to 96, 103 to 123, 124 to 144, 194 to 214, 219 to 239, 255 to 275, and 301 to 321; these read MGAS…LMLV, VIQS…VVVF, EALS…FGVP, VLLF…FVGA, ALIE…LVMA, MMTP…LFAF, ALFG…FSLL, LVYL…KLML, and QSLT…FWSA.

This sequence belongs to the TerC family.

It is found in the cell membrane. This is an uncharacterized protein from Mycobacterium tuberculosis (strain CDC 1551 / Oshkosh).